The primary structure comprises 823 residues: Protein Shroom1 (823 aa).

Met1 carries the N-acetylmethionine modification. Disordered stretches follow at residues 1-55 (MEAL…TERL), 72-110 (PTSKDAVLSTTQRPVQAVAGHSDPRSPEVQGSPGPLNRQ), and 124-159 (ATAHTAEPPSPPASRDAYRQRLQGAQRRVLRETSFQ). Composition is skewed to polar residues over residues 28-50 (RADSAYSSFSTASGDPETRTPSP) and 72-85 (PTSKDAVLSTTQRP). Phosphoserine occurs at positions 103, 133, 137, 166, 190, and 224. Positions 145 to 233 (LQGAQRRVLR…SEPGKLHRVG (89 aa)) constitute an ASD1 domain. The tract at residues 181–200 (TAHVRSASSSQELGEEEPAR) is disordered. 2 disordered regions span residues 270 to 303 (SSTELNSGPADLGNAHRPAGRSQSVSGEVMGPCK) and 349 to 375 (QTKPAGCGRRISETSVSTPGPSLPEDD). A Phosphothreonine modification is found at Thr383. Phosphoserine is present on Ser385. Disordered stretches follow at residues 420–503 (LHET…LTWG) and 566–620 (EMGE…STQA). Polar residues-rich tracts occupy residues 444–468 (RPTSIPETTNDDIPTFDTNGTTDPS), 489–503 (SETPGSPHHTSLTWG), and 586–620 (QDLQTSQEASRSENSTPDPDQSSGQEFPEGNSTQA). Residues 517 to 796 (EALVQELARL…QLDTIWSDLS (280 aa)) enclose the ASD2 domain.

It belongs to the shroom family. As to quaternary structure, interacts with F-actin.

It localises to the cytoplasm. The protein localises to the cytoskeleton. In terms of biological role, may be involved in the assembly of microtubule arrays during cell elongation. The chain is Protein Shroom1 (Shroom1) from Mus musculus (Mouse).